A 92-amino-acid chain; its full sequence is Cell division topological specificity factor (92 aa).

The protein belongs to the MinE family.

Its function is as follows. Prevents the cell division inhibition by proteins MinC and MinD at internal division sites while permitting inhibition at polar sites. This ensures cell division at the proper site by restricting the formation of a division septum at the midpoint of the long axis of the cell. This Symbiobacterium thermophilum (strain DSM 24528 / JCM 14929 / IAM 14863 / T) protein is Cell division topological specificity factor.